A 92-amino-acid chain; its full sequence is Small ribosomal subunit protein uS17 (92 aa).

It belongs to the universal ribosomal protein uS17 family. As to quaternary structure, part of the 30S ribosomal subunit.

Its function is as follows. One of the primary rRNA binding proteins, it binds specifically to the 5'-end of 16S ribosomal RNA. In Cupriavidus metallidurans (strain ATCC 43123 / DSM 2839 / NBRC 102507 / CH34) (Ralstonia metallidurans), this protein is Small ribosomal subunit protein uS17.